A 298-amino-acid polypeptide reads, in one-letter code: ATP phosphoribosyltransferase (298 aa).

Belongs to the ATP phosphoribosyltransferase family. Long subfamily. Requires Mg(2+) as cofactor.

The protein resides in the cytoplasm. The catalysed reaction is 1-(5-phospho-beta-D-ribosyl)-ATP + diphosphate = 5-phospho-alpha-D-ribose 1-diphosphate + ATP. It participates in amino-acid biosynthesis; L-histidine biosynthesis; L-histidine from 5-phospho-alpha-D-ribose 1-diphosphate: step 1/9. Feedback inhibited by histidine. Catalyzes the condensation of ATP and 5-phosphoribose 1-diphosphate to form N'-(5'-phosphoribosyl)-ATP (PR-ATP). Has a crucial role in the pathway because the rate of histidine biosynthesis seems to be controlled primarily by regulation of HisG enzymatic activity. The sequence is that of ATP phosphoribosyltransferase from Vibrio campbellii (strain ATCC BAA-1116).